The sequence spans 65 residues: Large ribosomal subunit protein bL33c (65 aa).

It belongs to the bacterial ribosomal protein bL33 family.

The protein localises to the plastid. Its subcellular location is the chloroplast. The sequence is that of Large ribosomal subunit protein bL33c (rpl33) from Porphyra purpurea (Red seaweed).